Reading from the N-terminus, the 275-residue chain is Polyamine aminopropyltransferase (275 aa).

One can recognise a PABS domain in the interval glutamate 2–lysine 235. Glutamine 31 lines the S-methyl-5'-thioadenosine pocket. 2 residues coordinate spermidine: histidine 62 and aspartate 86. Residues glutamate 106 and aspartate 137 to glycine 138 contribute to the S-methyl-5'-thioadenosine site. Catalysis depends on aspartate 155, which acts as the Proton acceptor. Aspartate 155–glutamate 158 lines the spermidine pocket. Proline 162 is a binding site for S-methyl-5'-thioadenosine.

The protein belongs to the spermidine/spermine synthase family. As to quaternary structure, homodimer or homotetramer.

The protein localises to the cytoplasm. It catalyses the reaction S-adenosyl 3-(methylsulfanyl)propylamine + putrescine = S-methyl-5'-thioadenosine + spermidine + H(+). It functions in the pathway amine and polyamine biosynthesis; spermidine biosynthesis; spermidine from putrescine: step 1/1. In terms of biological role, catalyzes the irreversible transfer of a propylamine group from the amino donor S-adenosylmethioninamine (decarboxy-AdoMet) to putrescine (1,4-diaminobutane) to yield spermidine. The sequence is that of Polyamine aminopropyltransferase from Bacillus cereus (strain ATCC 10987 / NRS 248).